Here is a 506-residue protein sequence, read N- to C-terminus: Cytochrome P450 6a8 (506 aa).

C451 is a heme binding site.

It belongs to the cytochrome P450 family. The cofactor is heme.

It localises to the endoplasmic reticulum membrane. The protein localises to the microsome membrane. In terms of biological role, involved in the metabolism of insect hormones and in the breakdown of synthetic insecticides. The polypeptide is Cytochrome P450 6a8 (Cyp6a8) (Drosophila melanogaster (Fruit fly)).